A 1099-amino-acid chain; its full sequence is Adenylate cyclase type 7 (1099 aa).

Residues 1–33 (MPAKGRYFLNEGDEGPDQAALYEKYRLTSLHGP) are Cytoplasmic-facing. 6 helical membrane passes run 34 to 54 (LLLLLLLVAAATCIALISIAF), 63 to 83 (QVVLGTAFLMLTLFVALYVLV), 95 to 117 (ALALLTWACLMVLGSVLMWDSLE), 122 to 142 (AWEQVPFFLFVVFVVYALLPL), 147 to 167 (AIVAGVTSTVSHLLVFGAVTR), and 178 to 198 (LGLQLLANAVILLGGNFTGAF). Residues 199-595 (HKHQLQDASR…YRLVPIPRAR (397 aa)) are Cytoplasmic-facing. Mg(2+)-binding residues include Asp-286, Ile-287, and Asp-330. ATP is bound by residues 286–291 (DIVGFT), 328–330 (LGD), and Arg-374. The segment at 456–476 (DPRSQQPPPPSHHLSKPKGDA) is disordered. Residues 479-484 (KMRASV) form a mediates regulation of adenylate cyclase activity by C5 alpha-induced G- beta and gamma pathway region. The tract at residues 493–501 (WGAARPFAH) is mediates regulation of adenylate cyclase activity by sphingosine 1-phosphate-induced G alpha 13 pathway. Positions 504-543 (HRESVSSSETPISNGRRQKAIPLRRHRAPDRSASPKGRLE) are disordered. Over residues 508–518 (VSSSETPISNG) the composition is skewed to polar residues. The tract at residues 508–585 (VSSSETPISN…IFLEKGFERE (78 aa)) is modulates adenylate cyclase activity by modulating the binding of G(s)alpha to the high-affinity G(s)alpha binding site in 7C1a/7C2. The segment covering 519-531 (RRQKAIPLRRHRA) has biased composition (basic residues). The next 3 helical transmembrane spans lie at 596-616 (YDFACASLVFVCILLVHLLVM), 621-641 (TLGVSFGLVACLLGLVLSFCF), and 670-689 (LVLVVLTVGSLLTVAIINMP). Asn-702 carries N-linked (GlcNAc...) asparagine glycosylation. Transmembrane regions (helical) follow at residues 719–738 (LLPYYTCSCILGFIACSVFL), 747–766 (MLLTVALVAYLLLFNLSPCW), and 813–833 (DLKIMVNFYLILFYATLILLS). Over 834-1099 (RQIDYYCRLD…TAKFQGLGLN (266 aa)) the chain is Cytoplasmic. Residues Lys-950, 1029–1031 (DIW), 1036–1040 (NVASR), and Lys-1076 contribute to the ATP site.

Belongs to the adenylyl cyclase class-4/guanylyl cyclase family. It depends on Mg(2+) as a cofactor. The cofactor is Mn(2+). Post-translationally, phosphorylated by PRKCD. Most abundant in heart, spleen and lung.

It is found in the membrane. It catalyses the reaction ATP = 3',5'-cyclic AMP + diphosphate. Its activity is regulated as follows. Activated by the G protein alpha subunit. Activated by the G protein beta and gamma subunit complex. Activated by GNA13 and GNA12. Ethanol and phorbol 12,13-dibutanoate significantly potentiate adenylate cyclase activity generated in response to the activation of the prostanoid receptor by the agonist prostaglandin E1(1-) in a PKC-dependent manner. Inhibited by lithium. Functionally, catalyzes the formation of cAMP in response to activation of G protein-coupled receptors. Functions in signaling cascades activated namely by thrombin and sphingosine 1-phosphate and mediates regulation of cAMP synthesis through synergistic action of the stimulatory G alpha protein with GNA13. Also, during inflammation, mediates zymosan-induced increase intracellular cAMP, leading to protein kinase A pathway activation in order to modulate innate immune responses through heterotrimeric G proteins G(12/13). Functions in signaling cascades activated namely by dopamine and C5 alpha chain and mediates regulation of cAMP synthesis through synergistic action of the stimulatory G protein with G beta:gamma complex. Functions, through cAMP response regulation, to keep inflammation under control during bacterial infection by sensing the presence of serum factors, such as the bioactive lysophospholipid (LPA) that regulate LPS-induced TNF-alpha production. However, it is also required for the optimal functions of B and T cells during adaptive immune responses by regulating cAMP synthesis in both B and T cells. The polypeptide is Adenylate cyclase type 7 (Mus musculus (Mouse)).